Reading from the N-terminus, the 476-residue chain is Protein PAL OF QUIRKY (476 aa).

An N-terminal signal peptide occupies residues 1–14 (MTTVSSAFATVAEG). Residues 204-256 (TRRTNSGTSGSGDGNGGICGQESMMLETNSSFGSTSSSVSSSNLPPIKSSGED) are disordered. Residues 212–222 (SGSGDGNGGIC) are compositionally biased toward gly residues. Residues 233-252 (SSFGSTSSSVSSSNLPPIKS) are compositionally biased toward low complexity.

Homodimer. Interacts with QKY and SUB/SCM at the plasma membrane. Observed in seedlings, roots, shoots, leaves, stems, inflorescence and flowers.

It is found in the cell membrane. The protein resides in the endomembrane system. Its function is as follows. Collaboratively with SUB and QKY, regulates cell growth anisotropy during gynoecium development, thus linking together cell-cell communication and cellular growth. This is Protein PAL OF QUIRKY from Arabidopsis thaliana (Mouse-ear cress).